The sequence spans 204 residues: Demethylsterigmatocystin 6-O-methyltransferase stcP (204 aa).

Residues 48–49, D73, 93–94, and R109 contribute to the S-adenosyl-L-methionine site; these read GG and DF. The active-site Proton acceptor is H113.

Belongs to the class I-like SAM-binding methyltransferase superfamily. Cation-independent O-methyltransferase family.

It catalyses the reaction 6-demethylsterigmatocystin + S-adenosyl-L-methionine = sterigmatocystin + S-adenosyl-L-homocysteine + H(+). Its pathway is mycotoxin biosynthesis; sterigmatocystin biosynthesis. Its function is as follows. Norsolorinic acid reductase; part of the gene cluster that mediates the biosynthesis of sterigmatocystin (ST), a polyketide-derived furanocoumarin which is part of the most toxic and carcinogenic compounds among the known mycotoxins. The first step in the biosynthesis of sterigmatocystin is the production of hexanoate by the fatty acid synthase (FAS) units stcJ and stcK. The polyketide backbone is assembled by the non-reducing polyketide synthase stcA by condensation of the starter hexanoyl-CoA and 7 malonyl-CoA extender units followed by cyclization and release of norsolorinic acid. Norsolorinic acid is the first stable intermediate in the biosynthesis of sterigmatocystin and is converted into averantin (AVN) by the ketoreductase stcE which reduces the hexanoate ketone to an alcohol. Averantin is then oxidized into 5'-hydroxyaverantin (HAVN) by the cytochrome P450 monooxygenase stcF. 5'-hydroxyaverantin is further converted to 5'-oxyaverantin (OAVN) by the 5'-hydroxyaverantin dehydrogenase stcG. The next step is the conversion of OAVN into averufin (AVF) which is catalyzed by a yet to be identified enzyme. The cytochrome P450 monooxygenase stcB and the flavin-binding monooxygenase stcW are both required for the conversion of averufin to 1-hydroxyversicolorone. The esterase stcI probably catalyzes the formation of versiconal hemiacetal acetate from 1-hydroxyversicolorone. The oxydoreductase stcN then probably catalyzes the biosynthetic step from versiconal to versicolorin B (VERB). The next step is performed by the versicolorin B desaturase stcL to produce versicolorin A (VERA). The ketoreductase stcU and the cytochrome P450 monooxygenase stcS are involved in the conversion of versicolorin A to demethylsterigmatocystin. The Baeyer-Villiger oxidas stcQ and the reductase stcR might be involved in the biosynthetic step from versicolorin A to demethylsterigmatocystin. The final step in the biosynthesis of sterigmatocystin is the methylation of demethylsterigmatocystin catalyzed by the methyltransferase stcP. In Emericella nidulans (strain FGSC A4 / ATCC 38163 / CBS 112.46 / NRRL 194 / M139) (Aspergillus nidulans), this protein is Demethylsterigmatocystin 6-O-methyltransferase stcP.